Here is a 381-residue protein sequence, read N- to C-terminus: V-type proton ATPase subunit C 1-B (381 aa).

T2 carries the N-acetylthreonine modification.

This sequence belongs to the V-ATPase C subunit family. V-ATPase is a heteromultimeric enzyme made up of two complexes: the ATP-hydrolytic V1 complex and the proton translocation V0 complex. The V1 complex consists of three catalytic AB heterodimers that form a heterohexamer, three peripheral stalks each consisting of EG heterodimers, one central rotor including subunits D and F, and the regulatory subunits C and H. The proton translocation complex V0 consists of the proton transport subunit a, a ring of proteolipid subunits c9c'', rotary subunit d, subunits e and f, and two accessory subunits.

Functionally, subunit of the V1 complex of vacuolar(H+)-ATPase (V-ATPase), a multisubunit enzyme composed of a peripheral complex (V1) that hydrolyzes ATP and a membrane integral complex (V0) that translocates protons. V-ATPase is responsible for acidifying and maintaining the pH of intracellular compartments and in some cell types, is targeted to the plasma membrane, where it is responsible for acidifying the extracellular environment. Subunit C is necessary for the assembly of the catalytic sector of the enzyme and is likely to have a specific function in its catalytic activity. This is V-type proton ATPase subunit C 1-B (atp6v1c1b) from Danio rerio (Zebrafish).